We begin with the raw amino-acid sequence, 156 residues long: ATP synthase subunit b (156 aa).

Residues 7 to 27 (LIGQLIAFALFVAFCMKFVWP) traverse the membrane as a helical segment.

It belongs to the ATPase B chain family. As to quaternary structure, F-type ATPases have 2 components, F(1) - the catalytic core - and F(0) - the membrane proton channel. F(1) has five subunits: alpha(3), beta(3), gamma(1), delta(1), epsilon(1). F(0) has three main subunits: a(1), b(2) and c(10-14). The alpha and beta chains form an alternating ring which encloses part of the gamma chain. F(1) is attached to F(0) by a central stalk formed by the gamma and epsilon chains, while a peripheral stalk is formed by the delta and b chains.

The protein resides in the cell inner membrane. Its function is as follows. F(1)F(0) ATP synthase produces ATP from ADP in the presence of a proton or sodium gradient. F-type ATPases consist of two structural domains, F(1) containing the extramembraneous catalytic core and F(0) containing the membrane proton channel, linked together by a central stalk and a peripheral stalk. During catalysis, ATP synthesis in the catalytic domain of F(1) is coupled via a rotary mechanism of the central stalk subunits to proton translocation. Component of the F(0) channel, it forms part of the peripheral stalk, linking F(1) to F(0). The polypeptide is ATP synthase subunit b (Actinobacillus pleuropneumoniae serotype 7 (strain AP76)).